The chain runs to 393 residues: Fructose-bisphosphate aldolase 4, cytosolic (393 aa).

Arginine 73 serves as a coordination point for substrate. Position 207 is an S-glutathionyl cysteine; transient; alternate (cysteine 207). S-nitrosocysteine; transient; alternate is present on cysteine 207. The active-site Proton acceptor is the glutamate 217. Lysine 259 acts as the Schiff-base intermediate with dihydroxyacetone-P in catalysis. Substrate-binding positions include 301 to 303 (SGG) and arginine 333.

It belongs to the class I fructose-bisphosphate aldolase family. As to quaternary structure, homotetramer. S-glutathionylated at Cys-207. In terms of processing, S-nitrosylated at Cys-207. As to expression, highly expressed in flowers.

It is found in the cytoplasm. The protein localises to the cytosol. It carries out the reaction beta-D-fructose 1,6-bisphosphate = D-glyceraldehyde 3-phosphate + dihydroxyacetone phosphate. The protein operates within carbohydrate degradation; glycolysis; D-glyceraldehyde 3-phosphate and glycerone phosphate from D-glucose: step 4/4. In terms of biological role, fructose-bisphosphate aldolase that plays a key role in glycolysis and gluconeogenesis. The polypeptide is Fructose-bisphosphate aldolase 4, cytosolic (Arabidopsis thaliana (Mouse-ear cress)).